A 188-amino-acid polypeptide reads, in one-letter code: Peptidyl-tRNA hydrolase (188 aa).

Y16 contacts tRNA. The Proton acceptor role is filled by H21. 3 residues coordinate tRNA: F66, N68, and N114.

This sequence belongs to the PTH family. Monomer.

Its subcellular location is the cytoplasm. The enzyme catalyses an N-acyl-L-alpha-aminoacyl-tRNA + H2O = an N-acyl-L-amino acid + a tRNA + H(+). Functionally, hydrolyzes ribosome-free peptidyl-tRNAs (with 1 or more amino acids incorporated), which drop off the ribosome during protein synthesis, or as a result of ribosome stalling. Its function is as follows. Catalyzes the release of premature peptidyl moieties from peptidyl-tRNA molecules trapped in stalled 50S ribosomal subunits, and thus maintains levels of free tRNAs and 50S ribosomes. This is Peptidyl-tRNA hydrolase from Citrifermentans bemidjiense (strain ATCC BAA-1014 / DSM 16622 / JCM 12645 / Bem) (Geobacter bemidjiensis).